The primary structure comprises 127 residues: Large ribosomal subunit protein bL12 (127 aa).

The protein belongs to the bacterial ribosomal protein bL12 family. In terms of assembly, homodimer. Part of the ribosomal stalk of the 50S ribosomal subunit. Forms a multimeric L10(L12)X complex, where L10 forms an elongated spine to which 2 to 4 L12 dimers bind in a sequential fashion. Binds GTP-bound translation factors.

Its function is as follows. Forms part of the ribosomal stalk which helps the ribosome interact with GTP-bound translation factors. Is thus essential for accurate translation. In Streptomyces griseus subsp. griseus (strain JCM 4626 / CBS 651.72 / NBRC 13350 / KCC S-0626 / ISP 5235), this protein is Large ribosomal subunit protein bL12.